The chain runs to 274 residues: Diaminopimelate epimerase (274 aa).

Residues N13, Q45, and N63 each coordinate substrate. Residue C72 is the Proton donor of the active site. Residues G73–N74, N158, N191, and E209–R210 each bind substrate. C218 (proton acceptor) is an active-site residue. A substrate-binding site is contributed by G219 to T220.

It belongs to the diaminopimelate epimerase family. In terms of assembly, homodimer.

The protein localises to the cytoplasm. It catalyses the reaction (2S,6S)-2,6-diaminopimelate = meso-2,6-diaminopimelate. It participates in amino-acid biosynthesis; L-lysine biosynthesis via DAP pathway; DL-2,6-diaminopimelate from LL-2,6-diaminopimelate: step 1/1. Its function is as follows. Catalyzes the stereoinversion of LL-2,6-diaminopimelate (L,L-DAP) to meso-diaminopimelate (meso-DAP), a precursor of L-lysine and an essential component of the bacterial peptidoglycan. This is Diaminopimelate epimerase from Pelagibacter ubique (strain HTCC1062).